A 284-amino-acid polypeptide reads, in one-letter code: L-ribulose-5-phosphate 3-epimerase UlaE (284 aa).

The protein belongs to the L-ribulose-5-phosphate 3-epimerase family.

It carries out the reaction L-ribulose 5-phosphate = L-xylulose 5-phosphate. The protein operates within cofactor degradation; L-ascorbate degradation; D-xylulose 5-phosphate from L-ascorbate: step 3/4. In terms of biological role, catalyzes the isomerization of L-xylulose-5-phosphate to L-ribulose-5-phosphate. Is involved in the anaerobic L-ascorbate utilization. The polypeptide is L-ribulose-5-phosphate 3-epimerase UlaE (Shigella flexneri serotype 5b (strain 8401)).